The following is a 20-amino-acid chain: Cicerin (20 aa).

The segment at 1–20 is disordered; it reads ARCENFADSYRQPPISSSQT.

Its function is as follows. Has antifungal activity against B.cinerea, F.oxysporum and M.arachidicola. Inhibits cell-free translation in rabbit reticulocyte lysate system. In Cicer arietinum (Chickpea), this protein is Cicerin.